Reading from the N-terminus, the 478-residue chain is Sorting nexin-4 (478 aa).

Over residues 1-10 the composition is skewed to basic and acidic residues; sequence MAVIDQHQDD. The disordered stretch occupies residues 1–56; that stretch reads MAVIDQHQDDFSNVSWNTDEHTAAESSSSVTATEFDDTERNGHNAYESDAPGSDGQ. The span at 24–33 shows a compositional bias: low complexity; the sequence is AESSSSVTAT. In terms of domain architecture, PX spans 58–180; sequence VLDCVVSEPL…IFLESPDWNA (123 aa). A 1,2-diacyl-sn-glycero-3-phospho-(1D-myo-inositol-3-phosphate)-binding residues include arginine 101, threonine 103, lysine 127, and arginine 146. The disordered stretch occupies residues 459–478; sequence EGVSGTRSTGVEPPGRRLAD.

The protein belongs to the sorting nexin family. In terms of assembly, interacts with the mitochondrial prohibitin complex subunits PHB1 and PHB2; the interaction is direct and plays a role in mitophagy.

Its subcellular location is the cytoplasm. The protein localises to the cytosol. It localises to the preautophagosomal structure membrane. It is found in the endosome membrane. The protein resides in the mitochondrion membrane. Its subcellular location is the lipid droplet. Its function is as follows. Sorting nexin, involved in the separation or division of vacuoles throughout the entire life cycle of the cells. Involved in retrieval of late-Golgi SNAREs from post-Golgi endosomes to the trans-Golgi network, for cytoplasm to vacuole transport (Cvt), and autophagy of large cargos including mitophagy, pexophagy and glycophagy. Required for the switch to necrotrophic growth. This Colletotrichum higginsianum (strain IMI 349063) (Crucifer anthracnose fungus) protein is Sorting nexin-4.